Reading from the N-terminus, the 146-residue chain is uncharacterized protein (146 aa).

Residues 7–27 (FVLSITIVLVILIIIAFIWYN) form a helical membrane-spanning segment.

Belongs to the asfivirus E146L family.

It is found in the host membrane. It localises to the virion. This is an uncharacterized protein from Ornithodoros (relapsing fever ticks).